Consider the following 375-residue polypeptide: LIM domain-binding protein 1 (375 aa).

2 disordered regions span residues 248-294 (PPAE…TFAL) and 331-375 (DAAN…QASQ). A compositionally biased stretch (low complexity) spans 266–282 (SGGSTMSSGGGNTNNSN). An LIM interaction domain (LID) domain is found at 300-339 (DVMVVGEPTLMGGEFGDEDERLITRLENTQFDAANGIDDE).

Belongs to the LDB family. Forms homodimers and heterodimers. Interacts with the LIM domain of LIM/homeobox factor lhx1/lim1, and with lhx3/lim3 and lhx5/lim5. Activates lhx1/lim1 by binding. The stoichiometry of lhx1/lim1 and ldb1 is important for their function and an excess of ldb1 can inhibit lhx1/lim1 function. When bound to lhx1/lim1, escapes degradation by rnf12. The N-terminus interacts with the N-terminal region of rnf12. In terms of processing, undergoes rnf12-mediated ubiquitin-proteasome-dependent degradation. Ubiquitously expressed in the early gastrula before localizing to the dorsal region of the vegetal hemisphere, which contains the Spemann organizer. Expressed in the CNS, pronephros and tail bud in neurula and tail-bud stage embryos. Expressed in multiple adult tissues including brain, heart, lung, stomach, intestine, liver, spleen, kidney, ovary, muscle and skin.

It is found in the nucleus. Binds to the LIM domain of a wide variety of LIM domain-containing transcription factors. Acts as a coactivator together with otx2 to stimulate lhx1/lim1-mediated activation of the gsc promoter in the Spemann organizer. Acts synergistically with lhx1/lim1 and ssbp in axis formation. The protein is LIM domain-binding protein 1 (ldb1) of Xenopus laevis (African clawed frog).